A 389-amino-acid chain; its full sequence is Lipid-A-disaccharide synthase (389 aa).

The protein belongs to the LpxB family.

It carries out the reaction a lipid X + a UDP-2-N,3-O-bis[(3R)-3-hydroxyacyl]-alpha-D-glucosamine = a lipid A disaccharide + UDP + H(+). The protein operates within bacterial outer membrane biogenesis; LPS lipid A biosynthesis. Its function is as follows. Condensation of UDP-2,3-diacylglucosamine and 2,3-diacylglucosamine-1-phosphate to form lipid A disaccharide, a precursor of lipid A, a phosphorylated glycolipid that anchors the lipopolysaccharide to the outer membrane of the cell. The chain is Lipid-A-disaccharide synthase from Paraburkholderia phymatum (strain DSM 17167 / CIP 108236 / LMG 21445 / STM815) (Burkholderia phymatum).